A 424-amino-acid chain; its full sequence is Adenylosuccinate synthetase (424 aa).

GTP is bound by residues 12–18 (GDEGKGK) and 40–42 (GHT). The active-site Proton acceptor is the D13. Positions 13 and 40 each coordinate Mg(2+). Residues 13–16 (DEGK), 38–41 (NAGH), T128, R142, Q223, T238, and R302 each bind IMP. H41 (proton donor) is an active-site residue. 298–304 (TTTGRPR) is a binding site for substrate. GTP contacts are provided by residues R304, 330-332 (HVD), and 412-414 (GVG).

This sequence belongs to the adenylosuccinate synthetase family. In terms of assembly, homodimer. Requires Mg(2+) as cofactor.

Its subcellular location is the cytoplasm. It catalyses the reaction IMP + L-aspartate + GTP = N(6)-(1,2-dicarboxyethyl)-AMP + GDP + phosphate + 2 H(+). It participates in purine metabolism; AMP biosynthesis via de novo pathway; AMP from IMP: step 1/2. Plays an important role in the de novo pathway of purine nucleotide biosynthesis. Catalyzes the first committed step in the biosynthesis of AMP from IMP. In Acetivibrio thermocellus (strain ATCC 27405 / DSM 1237 / JCM 9322 / NBRC 103400 / NCIMB 10682 / NRRL B-4536 / VPI 7372) (Clostridium thermocellum), this protein is Adenylosuccinate synthetase.